The chain runs to 379 residues: Alcohol dehydrogenase class-3 (379 aa).

Ala-2 is subject to N-acetylalanine. Residue Cys-47 coordinates Zn(2+). Residue His-48 participates in NAD(+) binding. Thr-49 and His-69 together coordinate an alcohol. Zn(2+)-binding residues include His-69, Glu-70, Cys-99, Cys-102, Cys-105, Cys-113, and Cys-177. Residues 202–207, Asp-226, Lys-231, Ile-272, 295–297, 320–322, and Arg-372 contribute to the NAD(+) site; these read GLGTVG, VGV, and TAF.

The protein belongs to the zinc-containing alcohol dehydrogenase family. Class-III subfamily. Homodimer. Zn(2+) serves as cofactor. In terms of tissue distribution, ubiquitous.

Its subcellular location is the cytoplasm. It catalyses the reaction a primary alcohol + NAD(+) = an aldehyde + NADH + H(+). It carries out the reaction a secondary alcohol + NAD(+) = a ketone + NADH + H(+). The catalysed reaction is S-(hydroxymethyl)glutathione + NADP(+) = S-formylglutathione + NADPH + H(+). The enzyme catalyses S-(hydroxymethyl)glutathione + NAD(+) = S-formylglutathione + NADH + H(+). It catalyses the reaction S-nitrosoglutathione + NADH + H(+) = S-(hydroxysulfenamide)glutathione + NAD(+). With respect to regulation, repressed by thiol-modifying agents N-ethylmaleimide (NEM) and 5,5-dithio-bis-(2-nitrobenzoic acid) (DTNB), as well as by methyl methanethiosulfonate (MMTS) in a dose-dependent manner. Inhibited by hydrogen peroxide H(2)O(2). Alcohol dehydrogenase catalyzing the reduction of nitrosoglutathione. Can also use long-chain alcohols including cinnamyl alcohol and geraniol, and, to a lower extent, octanol. Plays a central role in formaldehyde detoxification. Not able to use ethanol (EtOH) as substrate. The protein is Alcohol dehydrogenase class-3 of Arabidopsis thaliana (Mouse-ear cress).